The following is a 292-amino-acid chain: Protein sarah (292 aa).

Low complexity predominate over residues Met-1–Arg-51. The tract at residues Met-1–Phe-111 is disordered. A phosphoserine mark is found at Ser-67, Ser-72, and Ser-100. Residues Val-98 to Phe-111 are compositionally biased toward acidic residues. Thr-102 and Thr-196 each carry phosphothreonine. Residues Ser-215 and Ser-219 each carry the phosphoserine modification. Thr-246 is subject to Phosphothreonine.

This sequence belongs to the RCAN family. As to quaternary structure, interacts with Pp2B-14D, CanA-14F and CanB2. Post-translationally, phosphorylation at Ser-215 and Ser-219 is essential for calcineurin activation and completion of female meiosis. Sgg is required for phosphorylation of Ser-215 in activated eggs. Ser-100, Thr-102 and Ser-219 are highly phosphorylated in both ovaries and activated eggs; however, phosphorylation at Ser-100 or Thr-102 is not required for sra function in completion of female meiosis. Expressed in central nervous system of the third instar larvae, with a relatively intense signal in the brain and weak signals in the ventral ganglion. Relatively low, but ubiquitous expression level is observed in leg and wing imaginal disks, no signal is detected in the eye-antennal disks. Expressed in all neurons in the adult brain.

In terms of biological role, required for elongation of meiosis I spindle. Critical for ovulation, meiotic progression in oocytes and female courtship behavior, including their postmating changes. Regulates female meiosis by controlling calcineurin activity in the germline. Has a role in calcium signaling during egg activation; bcd mRNA polyadenylation and translation in the oocyte. The chain is Protein sarah (sra) from Drosophila melanogaster (Fruit fly).